Consider the following 346-residue polypeptide: Protein tas (346 aa).

Catalysis depends on Tyr53, which acts as the Proton donor. Position 234 to 244 (234 to 244 (SCLGFGTLTGK)) interacts with NADP(+).

Belongs to the aldo/keto reductase family. Aldo/keto reductase 2 subfamily.

This chain is Protein tas (tas), found in Escherichia coli (strain K12).